A 211-amino-acid chain; its full sequence is Mitotic spindle assembly checkpoint protein MAD2B (211 aa).

Residues 13–203 (QVVADVLSEF…SDILKMQLYV (191 aa)) form the HORMA domain.

Homooligomer. Interacts with REV1. Interacts with FZR1 (in complex with the anaphase promoting complex APC). May interact with CDC20. Heterodimer with REV3L. This dimer forms the minimal DNA polymerase zeta complex (Pol-zeta2), with REV3L bearing DNA polymerase catalytic activity, although its activity is very low in this context. Component of the tetrameric Pol-zeta complex (Pol-zeta4), which consists of REV3L, MAD2L2, POLD2 and POLD3; Pol-zeta4 is the fully active form of DNA polymerase zeta. Component of the shieldin complex, consisting of SHLD1, SHLD2, SHLD3 and MAD2L2/REV7. Within the complex, SHLD2 forms a scaffold which interacts with a SHLD3-MAD2L2 subcomplex via its N-terminus, and with SHLD1 via its C-terminus.

The protein localises to the nucleus. Its subcellular location is the cytoplasm. It localises to the cytoskeleton. The protein resides in the spindle. It is found in the chromosome. Its function is as follows. Adapter protein able to interact with different proteins and involved in different biological processes. Mediates the interaction between the error-prone DNA polymerase zeta catalytic subunit REV3L and the inserter polymerase REV1, thereby mediating the second polymerase switching in translesion DNA synthesis. Translesion DNA synthesis releases the replication blockade of replicative polymerases, stalled in presence of DNA lesions. May also play a role in signal transduction in response to DNA damage. May regulate the activation of the anaphase promoting complex APC thereby regulating progression through the cell cycle. Component of the shieldin complex, which plays an important role in repair of DNA double-stranded breaks (DSBs). During G1 and S phase of the cell cycle, the complex functions downstream of TP53BP1 to promote non-homologous end joining (NHEJ) and suppress DNA end resection. Through transcriptional regulation may play a role in epithelial-mesenchymal transdifferentiation. The chain is Mitotic spindle assembly checkpoint protein MAD2B (MAD2L2) from Gallus gallus (Chicken).